The sequence spans 182 residues: A-type ATP synthase subunit E (182 aa).

It belongs to the V-ATPase E subunit family. In terms of assembly, has multiple subunits with at least A(3), B(3), C, D, E, F, H, I and proteolipid K(x).

Its subcellular location is the cell membrane. Functionally, component of the A-type ATP synthase that produces ATP from ADP in the presence of a proton gradient across the membrane. In Picrophilus torridus (strain ATCC 700027 / DSM 9790 / JCM 10055 / NBRC 100828 / KAW 2/3), this protein is A-type ATP synthase subunit E.